The chain runs to 245 residues: 6-carboxyhexanoate--CoA ligase (245 aa).

This sequence belongs to the BioW family. As to quaternary structure, homodimer. Mg(2+) serves as cofactor.

The catalysed reaction is heptanedioate + ATP + CoA = 6-carboxyhexanoyl-CoA + AMP + diphosphate. The protein operates within metabolic intermediate metabolism; pimeloyl-CoA biosynthesis; pimeloyl-CoA from pimelate: step 1/1. In terms of biological role, catalyzes the transformation of pimelate into pimeloyl-CoA with concomitant hydrolysis of ATP to AMP. This is 6-carboxyhexanoate--CoA ligase from Thermodesulfovibrio yellowstonii (strain ATCC 51303 / DSM 11347 / YP87).